Reading from the N-terminus, the 459-residue chain is Neuronal acetylcholine receptor subunit beta-2 (459 aa).

The Extracellular portion of the chain corresponds to 1–203; sequence LRSDFLLGPE…ITYDFVIKRK (203 aa). 2 N-linked (GlcNAc...) asparagine glycosylation sites follow: Asn21 and Asn138. Residues Cys125 and Cys139 are joined by a disulfide bond. A helical membrane pass occupies residues 204 to 228; sequence PLFYTINLIIPCVLITSLAILVFYL. At 229 to 235 the chain is on the cytoplasmic side; that stretch reads PSDCGEK. A helical transmembrane segment spans residues 236–254; it reads VTLCMSVLLALTVFLLLIS. The Extracellular portion of the chain corresponds to 255-269; that stretch reads KIVPPTSLAVPLIGK. The helical transmembrane segment at 270–291 threads the bilayer; it reads YLMFTMVLVTFSIVTSVCVLNV. Residues 292 to 421 lie on the Cytoplasmic side of the membrane; that stretch reads HHRSPSTHYM…WKYVAMVIDR (130 aa). The helical transmembrane segment at 422–440 threads the bilayer; the sequence is LFLWIFILVCVVGTLGLFV.

This sequence belongs to the ligand-gated ion channel (TC 1.A.9) family. Acetylcholine receptor (TC 1.A.9.1) subfamily. Beta-2/CHRNB2 sub-subfamily. Neuronal AChR is a heteropentamer composed of two different types of subunits: alpha and beta. CHRNB2/Beta-2 subunit can be combined to CHRNA2/alpha-2, CHRNA3/alpha-3 or CHRNA4/alpha-4, CHRNA5/alpha-5, CHRNA6/alpha-6 and CHRNB3/beta-3 to give rise to functional receptors.

It localises to the synaptic cell membrane. The protein resides in the cell membrane. The catalysed reaction is Ca(2+)(in) = Ca(2+)(out). It catalyses the reaction K(+)(in) = K(+)(out). The enzyme catalyses Na(+)(in) = Na(+)(out). With respect to regulation, activated by a myriad of ligands such as acetylcholine, cytisine, nicotine, choline and epibatidine. nAChR activity is inhibited by the antagonist alpha-conotoxins BuIA, PnIA, PnIC, GID and MII, small disulfide-constrained peptides from cone snails. Its function is as follows. Component of neuronal acetylcholine receptors (nAChRs) that function as pentameric, ligand-gated cation channels with high calcium permeability among other activities. nAChRs are excitatory neurotrasnmitter receptors formed by a collection of nAChR subunits known to mediate synaptic transmission in the nervous system and the neuromuscular junction. Each nAchR subunit confers differential attributes to channel properties, including activation, deactivation and desensitization kinetics, pH sensitivity, cation permeability, and binding to allosteric modulators. CHRNB2 forms heteropentameric neuronal acetylcholine receptors with CHRNA2, CHRNA3, CHRNA4 and CHRNA6, as well as CHRNA5 and CHRNB3 as accesory subunits. The chain is Neuronal acetylcholine receptor subunit beta-2 (chrnb2) from Carassius auratus (Goldfish).